The primary structure comprises 309 residues: uncharacterized protein (309 aa).

The next 6 membrane-spanning stretches (helical) occupy residues 28-48 (IIAL…IMKP), 73-93 (MMLN…VIGW), 113-133 (LIVI…LLPI), 157-177 (ITAF…YFHS), 220-240 (FVVI…AALF), and 259-279 (IFAV…ILIL).

The protein localises to the cell membrane. This is an uncharacterized protein from Bacillus subtilis (strain 168).